We begin with the raw amino-acid sequence, 259 residues long: Phosphatidylglycerol--prolipoprotein diacylglyceryl transferase (259 aa).

The next 4 membrane-spanning stretches (helical) occupy residues 12 to 32, 46 to 66, 83 to 103, and 109 to 129; these read LSLHWYAVCILVGLLLAVYLA, IIDFILIAFPLAIIGARIYYV, IWNGGIAIYGGLITGTIVLFV, and VLNPIHFLDIAAPSVMLAQAI. Arg-131 lines the a 1,2-diacyl-sn-glycero-3-phospho-(1'-sn-glycerol) pocket. 3 consecutive transmembrane segments (helical) span residues 167-187, 194-214, and 226-246; these read VPTFLYESMWNLIGFVIIMVW, LLDGDIISFYLIWYGCGRLVI, and GIRVSQYVSVLLIIIAIVFIF.

This sequence belongs to the Lgt family.

It is found in the cell membrane. The catalysed reaction is L-cysteinyl-[prolipoprotein] + a 1,2-diacyl-sn-glycero-3-phospho-(1'-sn-glycerol) = an S-1,2-diacyl-sn-glyceryl-L-cysteinyl-[prolipoprotein] + sn-glycerol 1-phosphate + H(+). The protein operates within protein modification; lipoprotein biosynthesis (diacylglyceryl transfer). Catalyzes the transfer of the diacylglyceryl group from phosphatidylglycerol to the sulfhydryl group of the N-terminal cysteine of a prolipoprotein, the first step in the formation of mature lipoproteins. This chain is Phosphatidylglycerol--prolipoprotein diacylglyceryl transferase, found in Streptococcus equi subsp. zooepidemicus (strain H70).